Here is a 276-residue protein sequence, read N- to C-terminus: uncharacterized protein (276 aa).

An N-terminal signal peptide occupies residues 1 to 19; it reads MKKWLICSFVLVLLVSFTA. Cys20 carries the N-palmitoyl cysteine lipid modification. Residue Cys20 is the site of S-diacylglycerol cysteine attachment.

This sequence belongs to the NlpA lipoprotein family.

The protein localises to the cell membrane. This is an uncharacterized protein from Bacillus subtilis (strain 168).